Reading from the N-terminus, the 241-residue chain is B-cell receptor-associated protein 29 (241 aa).

Topologically, residues 1–6 (MTLQWA) are lumenal. Residues 7 to 27 (AVATFLYAEIGLILIFCLPFI) form a helical membrane-spanning segment. Over 28-43 (PPQRWQKIFSFNVWGK) the chain is Cytoplasmic. Residues 44–64 (IATFWNKAFLTIIILLIVLFL) form a helical membrane-spanning segment. The Lumenal portion of the chain corresponds to 65–103 (DAVREVRKYSSVHTIEKSSTSRPDAYEHTQMKLFRSQRN). Residues 104–124 (LYISGFSLFFWLVLRRLVTLI) form a helical membrane-spanning segment. At 125 to 241 (TQLAKELSNK…RLERGNKKRL (117 aa)) the chain is on the cytoplasmic side. A coiled-coil region spans residues 166-233 (GKDEECVLEA…KEHSELQDRL (68 aa)). Residues 198–223 (LSKAQNDVMEMKMQSERLSKEYDQLL) form a disordered region. A compositionally biased stretch (basic and acidic residues) spans 206 to 223 (MEMKMQSERLSKEYDQLL). The Di-lysine motif signature appears at 238–241 (KKRL).

This sequence belongs to the BCAP29/BCAP31 family. Homodimer. Heterodimer with BCAP31. Binds CASP8 (isoform 9) as a complex containing BCAP31, BCAP29, BCL2 and/or BCL2L1. Interacts with VAMP3, VAMP1 and membrane IgD immunoglobulins. May interact with ACTG1 and non-muscle myosin II.

The protein localises to the endoplasmic reticulum membrane. May play a role in anterograde transport of membrane proteins from the endoplasmic reticulum to the Golgi. May be involved in CASP8-mediated apoptosis. The sequence is that of B-cell receptor-associated protein 29 (BCAP29) from Homo sapiens (Human).